The primary structure comprises 163 residues: Nucleotide-binding protein BC_1159 (163 aa).

This sequence belongs to the YajQ family.

Its function is as follows. Nucleotide-binding protein. The chain is Nucleotide-binding protein BC_1159 from Bacillus cereus (strain ATCC 14579 / DSM 31 / CCUG 7414 / JCM 2152 / NBRC 15305 / NCIMB 9373 / NCTC 2599 / NRRL B-3711).